The primary structure comprises 239 residues: 1-(5-phosphoribosyl)-5-[(5-phosphoribosylamino)methylideneamino] imidazole-4-carboxamide isomerase (239 aa).

The Proton acceptor role is filled by D8. D129 acts as the Proton donor in catalysis.

Belongs to the HisA/HisF family.

The protein resides in the cytoplasm. The enzyme catalyses 1-(5-phospho-beta-D-ribosyl)-5-[(5-phospho-beta-D-ribosylamino)methylideneamino]imidazole-4-carboxamide = 5-[(5-phospho-1-deoxy-D-ribulos-1-ylimino)methylamino]-1-(5-phospho-beta-D-ribosyl)imidazole-4-carboxamide. It participates in amino-acid biosynthesis; L-histidine biosynthesis; L-histidine from 5-phospho-alpha-D-ribose 1-diphosphate: step 4/9. This chain is 1-(5-phosphoribosyl)-5-[(5-phosphoribosylamino)methylideneamino] imidazole-4-carboxamide isomerase, found in Bacillus thuringiensis (strain Al Hakam).